Reading from the N-terminus, the 454-residue chain is OTU domain-containing protein 1 (454 aa).

2 disordered regions span residues 36–64 (QSAS…REAA) and 116–257 (LPPP…SRAD). Residues 52-64 (RPPAAATEPREAA) are compositionally biased toward low complexity. Pro residues predominate over residues 116–125 (LPPPSAPSPP). Basic and acidic residues-rich tracts occupy residues 151-164 (DAPD…EHRQ), 193-210 (GEER…RASG), and 219-229 (ALRRQDPEAEA). One can recognise an OTU domain in the interval 282 to 411 (KYRFHIIPDG…NGHYDAVFDH (130 aa)). The segment at 287–293 (IIPDGNC) is cys-loop. Residue D290 is part of the active site. C293 (nucleophile) is an active-site residue. Residues 342–352 (AAQDGAWAGYP) form a his-loop region. The segment at 399–404 (WLSNGH) is variable-loop. The active site involves H404. One can recognise a UIM domain in the interval 430-449 (KRDEELAKSMAISLSKMYIE).

The catalysed reaction is Thiol-dependent hydrolysis of ester, thioester, amide, peptide and isopeptide bonds formed by the C-terminal Gly of ubiquitin (a 76-residue protein attached to proteins as an intracellular targeting signal).. Deubiquitinating enzyme that specifically hydrolyzes 'Lys-63'-linked polyubiquitin to monoubiquitin. Required for the stability and translation of a subset mRNAs with a high abundance of rare codons by mediating deubiquitination of 40S ribosomal protein RPS10/eS10, thereby antagonizing ZNF598-mediated 40S ubiquitination. The abundance of rare codons in mRNAs can limit the translation rate and can lead to ribosome collisions that trigger activation of ribosome quality control (RQC) pathway by ZNF598. OTUD1-mediated deubiquitination prevents activation of the RQC and subsequent dissociation of ribosomes and stimulates formation of polysomes and translation. The protein is OTU domain-containing protein 1 (Otud1) of Mus musculus (Mouse).